The chain runs to 537 residues: Arginine--tRNA ligase (537 aa).

The 'HIGH' region motif lies at alanine 113–histidine 123.

This sequence belongs to the class-I aminoacyl-tRNA synthetase family. As to quaternary structure, monomer.

The protein resides in the cytoplasm. The enzyme catalyses tRNA(Arg) + L-arginine + ATP = L-arginyl-tRNA(Arg) + AMP + diphosphate. This is Arginine--tRNA ligase (argS) from Mycoplasma pneumoniae (strain ATCC 29342 / M129 / Subtype 1) (Mycoplasmoides pneumoniae).